The chain runs to 143 residues: Peptide methionine sulfoxide reductase MsrB (143 aa).

Positions 16–139 (DAELRRRLTP…NSAALNFESR (124 aa)) constitute a MsrB domain. The Zn(2+) site is built by Cys-55, Cys-58, Cys-104, and Cys-107. Cys-128 (nucleophile) is an active-site residue.

The protein belongs to the MsrB Met sulfoxide reductase family. Requires Zn(2+) as cofactor.

The catalysed reaction is L-methionyl-[protein] + [thioredoxin]-disulfide + H2O = L-methionyl-(R)-S-oxide-[protein] + [thioredoxin]-dithiol. This Burkholderia cenocepacia (strain ATCC BAA-245 / DSM 16553 / LMG 16656 / NCTC 13227 / J2315 / CF5610) (Burkholderia cepacia (strain J2315)) protein is Peptide methionine sulfoxide reductase MsrB.